The primary structure comprises 261 residues: MVWKITGPLQACQLLLVVLSLPQGRTSSVLTVNGRTENYILDTQHGVQASLECAVQNHTEDEELLWYREDGIVDLKNGNKINISSVCVSPINESDNGVRFTCKLQRDQTVSVTVVLNVTFPPLLSGNGFQTVEENSDVSLVCNVKSNPQAQMMWYKNNSALVLEKGRHQIHQTRESFQLSITKVKKSDNGTYSCIASSSLKMETMDFHLLVKDKVFVMPAEPIIAACVVVVLTMAFALFSRRKRIMKLCGKKNDPNSETAL.

Positions 1–26 are cleaved as a signal peptide; that stretch reads MVWKITGPLQACQLLLVVLSLPQGRT. Positions 27-113 constitute an Ig-like C2-type 1 domain; it reads SSVLTVNGRT…LQRDQTVSVT (87 aa). The Extracellular portion of the chain corresponds to 27–215; sequence SSVLTVNGRT…DFHLLVKDKV (189 aa). A disulfide bridge links Cys-53 with Cys-102. Residues Asn-57, Asn-82, Asn-92, Asn-117, Asn-157, and Asn-189 are each glycosylated (N-linked (GlcNAc...) asparagine). Residues 121 to 206 enclose the Ig-like C2-type 2 domain; the sequence is PPLLSGNGFQ…SSSLKMETMD (86 aa). Cys-142 and Cys-194 are oxidised to a cystine. Residues 216-236 form a helical membrane-spanning segment; sequence FVMPAEPIIAACVVVVLTMAF. Residues 237-261 lie on the Cytoplasmic side of the membrane; sequence ALFSRRKRIMKLCGKKNDPNSETAL.

In terms of assembly, homodimer. N-glycosylated.

The protein resides in the cell membrane. The protein localises to the cytoplasm. In terms of biological role, may control cell-cell adhesion, cell migration and proliferation, cell morphology, and protects renal epithelial cells from oxidative cell injury to promote cell survival. This is Transmembrane and immunoglobulin domain-containing protein 1 from Mus musculus (Mouse).